The chain runs to 875 residues: Valine--tRNA ligase (875 aa).

A 'HIGH' region motif is present at residues 41 to 51; sequence PNVTGSLHMGH. The short motif at 525 to 529 is the 'KMSKS' region element; sequence KMSKS. Residue lysine 528 coordinates ATP. The stretch at 810 to 875 forms a coiled coil; sequence VDLELIKKNL…ERISITIKGL (66 aa).

Belongs to the class-I aminoacyl-tRNA synthetase family. ValS type 1 subfamily. As to quaternary structure, monomer.

It localises to the cytoplasm. The catalysed reaction is tRNA(Val) + L-valine + ATP = L-valyl-tRNA(Val) + AMP + diphosphate. In terms of biological role, catalyzes the attachment of valine to tRNA(Val). As ValRS can inadvertently accommodate and process structurally similar amino acids such as threonine, to avoid such errors, it has a 'posttransfer' editing activity that hydrolyzes mischarged Thr-tRNA(Val) in a tRNA-dependent manner. The protein is Valine--tRNA ligase of Pelagibacter ubique (strain HTCC1062).